Reading from the N-terminus, the 180-residue chain is NADH-quinone oxidoreductase subunit I (180 aa).

2 4Fe-4S ferredoxin-type domains span residues 50–80 and 90–119; these read LTRDPDGEERCVACNLCAVACPVGCISLQKA and EFFRINFSRCIFCGLCEEACPTTAIQLTPD. The [4Fe-4S] cluster site is built by Cys60, Cys63, Cys66, Cys70, Cys99, Cys102, Cys105, and Cys109.

The protein belongs to the complex I 23 kDa subunit family. As to quaternary structure, NDH-1 is composed of 13 different subunits. Subunits NuoA, H, J, K, L, M, N constitute the membrane sector of the complex. Requires [4Fe-4S] cluster as cofactor.

It localises to the cell inner membrane. It carries out the reaction a quinone + NADH + 5 H(+)(in) = a quinol + NAD(+) + 4 H(+)(out). NDH-1 shuttles electrons from NADH, via FMN and iron-sulfur (Fe-S) centers, to quinones in the respiratory chain. The immediate electron acceptor for the enzyme in this species is believed to be ubiquinone. Couples the redox reaction to proton translocation (for every two electrons transferred, four hydrogen ions are translocated across the cytoplasmic membrane), and thus conserves the redox energy in a proton gradient. This Yersinia pseudotuberculosis serotype O:1b (strain IP 31758) protein is NADH-quinone oxidoreductase subunit I.